The sequence spans 81 residues: Sulfur carrier protein TusA (81 aa).

Catalysis depends on Cys-19, which acts as the Cysteine persulfide intermediate.

The protein belongs to the sulfur carrier protein TusA family.

It is found in the cytoplasm. Sulfur carrier protein which probably makes part of a sulfur-relay system. The chain is Sulfur carrier protein TusA from Shewanella putrefaciens (strain CN-32 / ATCC BAA-453).